Consider the following 104-residue polypeptide: MYAIIETGGKQFRVKSGDIVKIEKLNIEPGQEVIFDKVLLFKGNEGLKIGNPYIEGVKVKAEVIDEKKDKKVLVYSPPSKKAIHKLKGHRQWYTKIKIKEIVGG.

The protein belongs to the bacterial ribosomal protein bL21 family. In terms of assembly, part of the 50S ribosomal subunit. Contacts protein L20.

This protein binds to 23S rRNA in the presence of protein L20. The sequence is that of Large ribosomal subunit protein bL21 from Thermodesulfovibrio yellowstonii (strain ATCC 51303 / DSM 11347 / YP87).